The sequence spans 292 residues: Probable ABC transporter phosphonate/phosphite binding protein PhnD2 (292 aa).

The N-terminal stretch at Met-1 to Ala-20 is a signal peptide. The N-palmitoyl cysteine moiety is linked to residue Cys-21. Residue Cys-21 is the site of S-diacylglycerol cysteine attachment.

It belongs to the phosphate/phosphite/phosphonate binding protein family. In terms of assembly, the complex may be composed of two ATP-binding proteins (PhnC2), two transmembrane proteins (PhnE2) and a solute-binding protein (PhnD2).

It is found in the cell membrane. In terms of biological role, probably part of the ABC transporter complex PhnC2D2E2. Binds strongly to methylphosphonate (MPn), ethylphosphonate (EPn) and inorganic phosphite. The sequence is that of Probable ABC transporter phosphonate/phosphite binding protein PhnD2 from Prochlorococcus marinus (strain MIT 9301).